We begin with the raw amino-acid sequence, 415 residues long: CCA-adding enzyme (415 aa).

The ATP site is built by Ser-52 and Arg-55. Positions 52 and 55 each coordinate CTP. Residues Asp-64, Asp-66, and Asp-116 each coordinate Mg(2+). Residues His-139, Lys-159, and Tyr-168 each contribute to the ATP site. His-139, Lys-159, and Tyr-168 together coordinate CTP.

It belongs to the tRNA nucleotidyltransferase/poly(A) polymerase family. Archaeal CCA-adding enzyme subfamily. Homodimer. Mg(2+) is required as a cofactor.

It catalyses the reaction a tRNA precursor + 2 CTP + ATP = a tRNA with a 3' CCA end + 3 diphosphate. The catalysed reaction is a tRNA with a 3' CCA end + 2 CTP + ATP = a tRNA with a 3' CCACCA end + 3 diphosphate. In terms of biological role, catalyzes the addition and repair of the essential 3'-terminal CCA sequence in tRNAs without using a nucleic acid template. Adds these three nucleotides in the order of C, C, and A to the tRNA nucleotide-73, using CTP and ATP as substrates and producing inorganic pyrophosphate. tRNA 3'-terminal CCA addition is required both for tRNA processing and repair. Also involved in tRNA surveillance by mediating tandem CCA addition to generate a CCACCA at the 3' terminus of unstable tRNAs. While stable tRNAs receive only 3'-terminal CCA, unstable tRNAs are marked with CCACCA and rapidly degraded. The protein is CCA-adding enzyme of Pyrobaculum neutrophilum (strain DSM 2338 / JCM 9278 / NBRC 100436 / V24Sta) (Thermoproteus neutrophilus).